Here is a 674-residue protein sequence, read N- to C-terminus: Methionine--tRNA ligase (674 aa).

The 'HIGH' region signature appears at 11–21 (PYANGDLHLGH). Residues Cys142, Cys145, Cys155, and Cys158 each coordinate Zn(2+). Residues 330 to 334 (KMSKS) carry the 'KMSKS' region motif. An ATP-binding site is contributed by Lys333. Positions 574–674 (DFMKVDLRIA…EGAQPGMRVK (101 aa)) constitute a tRNA-binding domain.

This sequence belongs to the class-I aminoacyl-tRNA synthetase family. MetG type 1 subfamily. As to quaternary structure, homodimer. It depends on Zn(2+) as a cofactor.

The protein resides in the cytoplasm. It catalyses the reaction tRNA(Met) + L-methionine + ATP = L-methionyl-tRNA(Met) + AMP + diphosphate. Functionally, is required not only for elongation of protein synthesis but also for the initiation of all mRNA translation through initiator tRNA(fMet) aminoacylation. The polypeptide is Methionine--tRNA ligase (Francisella tularensis subsp. holarctica (strain FTNF002-00 / FTA)).